A 367-amino-acid polypeptide reads, in one-letter code: Mannan endo-1,4-beta-mannosidase (367 aa).

A signal peptide spans 1–17 (MLLTALAVLFASTGCQA). Residues Trp79 and Asn176 each contribute to the substrate site. Glu177 serves as the catalytic Proton donor. Cys192 and Cys259 are joined by a disulfide. 3 residues coordinate substrate: Trp205, Trp240, and Tyr279. Glu308 serves as the catalytic Nucleophile. Trp337 is a binding site for substrate.

Monomer. The disulfide bond between Cys-192 and Cys-259 has not been observed in X-ray crystallography. This may be a consequence of the X-ray radiation.

The enzyme catalyses Random hydrolysis of (1-&gt;4)-beta-D-mannosidic linkages in mannans, galactomannans and glucomannans.. Functionally, hydrolyzes 1,4-beta linked polysaccharide backbones of mannans. Hydrolyzes mannohexaose (M6) preferentially to mannotriose (M4) and less preferentially to mannotetraose (M3), mannopentaose (M5), and mannobiose (M2); hydrolyzes M5 preferentially to M2, and M3, and less preferentially to mannotetraose M4; hydrolyzes M4 preferentially to M3, and less preferentially to mannose (M1), plus very little M2. Does not hydrolyze mannobiose or mannotriose. Does not hydrolyze xlyan, starch, cellulose or galactose. This Mytilus edulis (Blue mussel) protein is Mannan endo-1,4-beta-mannosidase.